Reading from the N-terminus, the 506-residue chain is 5-OH-xanthotoxin synthase (506 aa).

Residues proline 3–histidine 23 form a helical membrane-spanning segment. Residues threonine 365–isoleucine 370 form a substrate specificity region. Cysteine 446 contacts heme.

Belongs to the cytochrome P450 family. Heme serves as cofactor.

It localises to the microsome membrane. It carries out the reaction xanthotoxin + reduced [NADPH--hemoprotein reductase] + O2 = 5-hydroxyxanthotoxin + oxidized [NADPH--hemoprotein reductase] + H2O + 2 H(+). It functions in the pathway secondary metabolite biosynthesis. In terms of biological role, involved in the biosynthesis of coumarins and furanocoumarins (FCs), natural products required for defense responses against attacks by predators with potential medical and agroindustrial usages such as anticoagulant, rodenticide and artificial vanilla substitutes. Catalyzes the conversion of xanthotoxin into 5-hydroxyxanthotoxin. The protein is 5-OH-xanthotoxin synthase of Pastinaca sativa (Wild parsnip).